The following is a 196-amino-acid chain: Peptidyl-tRNA hydrolase (196 aa).

Y17 provides a ligand contact to tRNA. H22 acts as the Proton acceptor in catalysis. Residues F68, N70, and N116 each coordinate tRNA.

Belongs to the PTH family. In terms of assembly, monomer.

The protein localises to the cytoplasm. It carries out the reaction an N-acyl-L-alpha-aminoacyl-tRNA + H2O = an N-acyl-L-amino acid + a tRNA + H(+). In terms of biological role, hydrolyzes ribosome-free peptidyl-tRNAs (with 1 or more amino acids incorporated), which drop off the ribosome during protein synthesis, or as a result of ribosome stalling. Functionally, catalyzes the release of premature peptidyl moieties from peptidyl-tRNA molecules trapped in stalled 50S ribosomal subunits, and thus maintains levels of free tRNAs and 50S ribosomes. This chain is Peptidyl-tRNA hydrolase, found in Yersinia pseudotuberculosis serotype O:1b (strain IP 31758).